A 196-amino-acid chain; its full sequence is Pyridoxine/pyridoxamine 5'-phosphate oxidase (196 aa).

Residues 44–49 (RTVLLK), 59–60 (YT), arginine 65, lysine 66, and glutamine 88 contribute to the FMN site. Substrate is bound at residue lysine 49. Tyrosine 106, arginine 110, and serine 114 together coordinate substrate. Residues 123–124 (QS) and tryptophan 169 each bind FMN. A substrate-binding site is contributed by 175–177 (RLH). FMN is bound at residue arginine 179.

Belongs to the pyridoxamine 5'-phosphate oxidase family. Homodimer. The cofactor is FMN.

It catalyses the reaction pyridoxamine 5'-phosphate + O2 + H2O = pyridoxal 5'-phosphate + H2O2 + NH4(+). It carries out the reaction pyridoxine 5'-phosphate + O2 = pyridoxal 5'-phosphate + H2O2. Its pathway is cofactor metabolism; pyridoxal 5'-phosphate salvage; pyridoxal 5'-phosphate from pyridoxamine 5'-phosphate: step 1/1. The protein operates within cofactor metabolism; pyridoxal 5'-phosphate salvage; pyridoxal 5'-phosphate from pyridoxine 5'-phosphate: step 1/1. Functionally, catalyzes the oxidation of either pyridoxine 5'-phosphate (PNP) or pyridoxamine 5'-phosphate (PMP) into pyridoxal 5'-phosphate (PLP). This is Pyridoxine/pyridoxamine 5'-phosphate oxidase from Alkalilimnicola ehrlichii (strain ATCC BAA-1101 / DSM 17681 / MLHE-1).